Reading from the N-terminus, the 413-residue chain is Multifunctional CCA protein (413 aa).

Positions 8 and 11 each coordinate ATP. The CTP site is built by G8 and R11. Mg(2+) is bound by residues D21 and D23. ATP contacts are provided by R91, R143, and R146. Positions 91, 143, and 146 each coordinate CTP. The HD domain maps to 232 to 333 (TGVHVMMVID…VRLLERADAL (102 aa)).

The protein belongs to the tRNA nucleotidyltransferase/poly(A) polymerase family. Bacterial CCA-adding enzyme type 1 subfamily. As to quaternary structure, monomer. Can also form homodimers and oligomers. The cofactor is Mg(2+). It depends on Ni(2+) as a cofactor.

The catalysed reaction is a tRNA precursor + 2 CTP + ATP = a tRNA with a 3' CCA end + 3 diphosphate. It carries out the reaction a tRNA with a 3' CCA end + 2 CTP + ATP = a tRNA with a 3' CCACCA end + 3 diphosphate. In terms of biological role, catalyzes the addition and repair of the essential 3'-terminal CCA sequence in tRNAs without using a nucleic acid template. Adds these three nucleotides in the order of C, C, and A to the tRNA nucleotide-73, using CTP and ATP as substrates and producing inorganic pyrophosphate. tRNA 3'-terminal CCA addition is required both for tRNA processing and repair. Also involved in tRNA surveillance by mediating tandem CCA addition to generate a CCACCA at the 3' terminus of unstable tRNAs. While stable tRNAs receive only 3'-terminal CCA, unstable tRNAs are marked with CCACCA and rapidly degraded. The sequence is that of Multifunctional CCA protein from Burkholderia pseudomallei (strain K96243).